We begin with the raw amino-acid sequence, 263 residues long: MSLPESFALTAEDAKLLLAANVHLGSKNVQVHNEPYVYKTRPDGVNVINIAKTWEKIVLAARIIAAIPNASDVVVCSSRTFGQRAVLKFASHTGATPIAGRFTPGNFTNYITRSFKEPRLVIVTDPRTDAQAIKESSYVNIPVIALSDVDSPSEYVDVAIPCNNKGKHSIGLIWWLLAREVLRLRGIIPDREAEWSVMPDLYFYRDPEEIEQNAAEEARAGATEETEEVVAEAETEWNTETNVEDWADSGVTAAGEEAAASQW.

An N-acetylserine modification is found at serine 2. The segment covering 213–223 has biased composition (low complexity); it reads NAAEEARAGAT. The interval 213–245 is disordered; that stretch reads NAAEEARAGATEETEEVVAEAETEWNTETNVED. Positions 224–245 are enriched in acidic residues; the sequence is EETEEVVAEAETEWNTETNVED.

It belongs to the universal ribosomal protein uS2 family. Component of the small ribosomal subunit. Mature ribosomes consist of a small (40S) and a large (60S) subunit. The 40S subunit contains about 33 different proteins and 1 molecule of RNA (18S). The 60S subunit contains about 49 different proteins and 3 molecules of RNA (25S, 5.8S and 5S). Interacts with RPS21.

It localises to the cytoplasm. Functionally, required for the assembly and/or stability of the 40S ribosomal subunit. Required for the processing of the 20S rRNA-precursor to mature 18S rRNA in a late step of the maturation of 40S ribosomal subunits. The polypeptide is Small ribosomal subunit protein uS2 (Clavispora lusitaniae (strain ATCC 42720) (Yeast)).